The following is a 251-amino-acid chain: Small ribosomal subunit protein uS3 (251 aa).

A KH type-2 domain is found at 39–109 (IRNYVLARLK…EVKIDVVEVI (71 aa)). Over residues 221-239 (EMKRMKDRRADSKSRPRDP) the composition is skewed to basic and acidic residues. Positions 221–251 (EMKRMKDRRADSKSRPRDPRSKRRRSRTKRA) are disordered. Residues 240 to 251 (RSKRRRSRTKRA) show a composition bias toward basic residues.

This sequence belongs to the universal ribosomal protein uS3 family. As to quaternary structure, part of the 30S ribosomal subunit. Forms a tight complex with proteins S10 and S14.

In terms of biological role, binds the lower part of the 30S subunit head. Binds mRNA in the 70S ribosome, positioning it for translation. The polypeptide is Small ribosomal subunit protein uS3 (Chlorobium limicola (strain DSM 245 / NBRC 103803 / 6330)).